The primary structure comprises 263 residues: Interleukin-33 (263 aa).

Over residues 1–17 (MKYSTTKIPPAKMNSSA) the composition is skewed to polar residues. The tract at residues 1–28 (MKYSTTKIPPAKMNSSADKALVKSPKLR) is disordered. A homeodomain-like HTH domain region spans residues 1–65 (MKYSTTKIPP…CYFRKEITKR (65 aa)). The tract at residues 62 to 103 (ITKRYSPRTAEKCRKQCLVFTACHQQLNKDFTSDVPMLQKCF) is interaction with RELA.

The protein belongs to the IL-1 family. Highly divergent. As to quaternary structure, forms a 1:1:1 heterotrimeric complex with its primary high-affinity receptor IL1RL1 and the coreceptor IL1RAP. Interacts with cargo receptor TMED10; the interaction mediates the translocation from the cytoplasm into the ERGIC (endoplasmic reticulum-Golgi intermediate compartment) and thereby secretion. In terms of processing, the full-length protein can be released from cells and is able to signal via the IL1RL1/ST2 receptor. However, proteolytic processing by CELA1, CSTG/cathepsin G and ELANE/neutrophil elastase produces C-terminal peptides that are more active than the unprocessed full-length protein. May also be proteolytically processed by calpains. Proteolytic cleavage mediated by apoptotic caspases including CASP3 and CASP7 results in IL33 inactivation. In vitro proteolytic cleavage by CASP1 was reported but could not be confirmed in vivo suggesting that IL33 is probably not a direct substrate for that caspase. Expressed in cultured umbilical artery smooth muscle cells after stimulation with IL1A and IL1B, and to a lesser extent with IFNG. Expressed in vasospastic cerebral arteries after subarachnoid hemorrhage.

It localises to the nucleus. It is found in the chromosome. The protein localises to the cytoplasm. Its subcellular location is the cytoplasmic vesicle. The protein resides in the secretory vesicle. It localises to the secreted. Its function is as follows. Cytokine that binds to and signals through the IL1RL1/ST2 receptor which in turn activates NF-kappa-B and MAPK signaling pathways in target cells. Involved in the maturation of Th2 cells inducing the secretion of T-helper type 2-associated cytokines. Also involved in activation of mast cells, basophils, eosinophils and natural killer cells. Acts as a chemoattractant for Th2 cells, and may function as an 'alarmin', that amplifies immune responses during tissue injury. Induces rapid UCP2-dependent mitochondrial rewiring that attenuates the generation of reactive oxygen species and preserves the integrity of Krebs cycle required for persistent production of itaconate and subsequent GATA3-dependent differentiation of inflammation-resolving alternatively activated macrophages. Functionally, in quiescent endothelia the uncleaved form is constitutively and abundantly expressed, and acts as a chromatin-associated nuclear factor with transcriptional repressor properties, it may sequester nuclear NF-kappaB/RELA, lowering expression of its targets. This form is rapidely lost upon angiogenic or pro-inflammatory activation. This Canis lupus familiaris (Dog) protein is Interleukin-33 (IL33).